The primary structure comprises 400 residues: Tryptophan synthase beta chain (400 aa).

K92 is subject to N6-(pyridoxal phosphate)lysine.

This sequence belongs to the TrpB family. In terms of assembly, tetramer of two alpha and two beta chains. Pyridoxal 5'-phosphate serves as cofactor.

The catalysed reaction is (1S,2R)-1-C-(indol-3-yl)glycerol 3-phosphate + L-serine = D-glyceraldehyde 3-phosphate + L-tryptophan + H2O. It participates in amino-acid biosynthesis; L-tryptophan biosynthesis; L-tryptophan from chorismate: step 5/5. Its function is as follows. The beta subunit is responsible for the synthesis of L-tryptophan from indole and L-serine. The sequence is that of Tryptophan synthase beta chain from Neisseria meningitidis serogroup A / serotype 4A (strain DSM 15465 / Z2491).